The chain runs to 576 residues: Proteinaceous RNase P 3 (576 aa).

Over residues 65–75 (NRRSRHDDESP) the composition is skewed to basic and acidic residues. The segment at 65–88 (NRRSRHDDESPKNPNKKKKGNRNP) is disordered. PPR repeat units lie at residues 88-123 (PEKS…DIRL), 129-166 (QSLL…GISP), 167-201 (NESS…GGVS), and 204-238 (RLRT…GIVL). Residues 335-570 (SSAGKCLSCD…KEESLRSWMC (236 aa)) form the PRORP domain. Zn(2+) is bound by residues cysteine 340 and cysteine 343. The Mn(2+) site is built by aspartate 402, aspartate 480, aspartate 481, and aspartate 499. Residues histidine 553 and cysteine 570 each contribute to the Zn(2+) site.

Belongs to the PPR family. P subfamily. Requires Mg(2+) as cofactor. It depends on Mn(2+) as a cofactor.

The protein localises to the nucleus. It carries out the reaction Endonucleolytic cleavage of RNA, removing 5'-extranucleotides from tRNA precursor.. Endonuclease RNase P responsible for the 5' maturation of tRNA precursors. Also involved in the maturation of mRNA and small nucleolar RNA (snoRNA). The protein is Proteinaceous RNase P 3 (PRORP3) of Arabidopsis thaliana (Mouse-ear cress).